We begin with the raw amino-acid sequence, 418 residues long: Probable serine hydroxymethyltransferase (418 aa).

Residues L118 and 122 to 124 (GHL) each bind (6S)-5,6,7,8-tetrahydrofolate. K226 carries the N6-(pyridoxal phosphate)lysine modification. Residue 351-353 (SPF) coordinates (6S)-5,6,7,8-tetrahydrofolate.

The protein belongs to the SHMT family. As to quaternary structure, homodimer. Requires pyridoxal 5'-phosphate as cofactor.

The protein resides in the cytoplasm. It catalyses the reaction (6R)-5,10-methylene-5,6,7,8-tetrahydrofolate + glycine + H2O = (6S)-5,6,7,8-tetrahydrofolate + L-serine. It functions in the pathway one-carbon metabolism; tetrahydrofolate interconversion. Functionally, catalyzes the reversible interconversion of serine and glycine with tetrahydrofolate (THF) serving as the one-carbon carrier. This reaction serves as the major source of one-carbon groups required for the biosynthesis of purines, thymidylate, methionine, and other important biomolecules. This chain is Probable serine hydroxymethyltransferase, found in Mesomycoplasma hyopneumoniae (strain 232) (Mycoplasma hyopneumoniae).